A 391-amino-acid polypeptide reads, in one-letter code: Processive diacylglycerol beta-glucosyltransferase (391 aa).

This sequence belongs to the glycosyltransferase 28 family. UgtP subfamily.

It is found in the cell membrane. The enzyme catalyses a 1,2-diacyl-3-O-(beta-D-glucopyranosyl)-sn-glycerol + UDP-alpha-D-glucose = a 1,2-diacyl-3-O-(beta-D-Glc-(1-&gt;6)-beta-D-Glc)-sn-glycerol + UDP + H(+). It catalyses the reaction a 1,2-diacyl-sn-glycerol + UDP-alpha-D-glucose = a 1,2-diacyl-3-O-(beta-D-glucopyranosyl)-sn-glycerol + UDP + H(+). It participates in glycolipid metabolism; diglucosyl-diacylglycerol biosynthesis. Processive glucosyltransferase involved in the biosynthesis of both the bilayer- and non-bilayer-forming membrane glucolipids. Is able to successively transfer two glucosyl residues to diacylglycerol (DAG), thereby catalyzing the formation of beta-monoglucosyl-DAG (3-O-(beta-D-glucopyranosyl)-1,2-diacyl-sn-glycerol) and beta-diglucosyl-DAG (3-O-(beta-D-glucopyranosyl-beta-(1-&gt;6)-D-glucopyranosyl)-1,2-diacyl-sn-glycerol). Beta-diglucosyl-DAG is the predominant glycolipid found in Bacillales and is also used as a membrane anchor for lipoteichoic acid (LTA). This Staphylococcus haemolyticus (strain JCSC1435) protein is Processive diacylglycerol beta-glucosyltransferase.